Reading from the N-terminus, the 185-residue chain is Ribosome-recycling factor (185 aa).

Belongs to the RRF family.

The protein resides in the cytoplasm. Its function is as follows. Responsible for the release of ribosomes from messenger RNA at the termination of protein biosynthesis. May increase the efficiency of translation by recycling ribosomes from one round of translation to another. This Klebsiella pneumoniae (strain 342) protein is Ribosome-recycling factor.